A 484-amino-acid polypeptide reads, in one-letter code: Putative transporter B0252.3 (484 aa).

The next 11 membrane-spanning stretches (helical) occupy residues I43–C63, S95–A115, L121–S141, I144–A164, V183–L203, Y208–V228, M286–F306, L321–M341, V348–S368, I373–F393, and L433–L453.

Belongs to the major facilitator superfamily. Sugar transporter (TC 2.A.1.1) family.

It localises to the membrane. This Caenorhabditis elegans protein is Putative transporter B0252.3.